A 359-amino-acid polypeptide reads, in one-letter code: Phosphoserine aminotransferase (359 aa).

R41 contacts L-glutamate. Residues 75–76 (AS), W101, T152, D171, and Q194 contribute to the pyridoxal 5'-phosphate site. Position 195 is an N6-(pyridoxal phosphate)lysine (K195). 236 to 237 (NT) serves as a coordination point for pyridoxal 5'-phosphate.

The protein belongs to the class-V pyridoxal-phosphate-dependent aminotransferase family. SerC subfamily. In terms of assembly, homodimer. It depends on pyridoxal 5'-phosphate as a cofactor.

The protein resides in the cytoplasm. It catalyses the reaction O-phospho-L-serine + 2-oxoglutarate = 3-phosphooxypyruvate + L-glutamate. The enzyme catalyses 4-(phosphooxy)-L-threonine + 2-oxoglutarate = (R)-3-hydroxy-2-oxo-4-phosphooxybutanoate + L-glutamate. It participates in amino-acid biosynthesis; L-serine biosynthesis; L-serine from 3-phospho-D-glycerate: step 2/3. It functions in the pathway cofactor biosynthesis; pyridoxine 5'-phosphate biosynthesis; pyridoxine 5'-phosphate from D-erythrose 4-phosphate: step 3/5. Functionally, catalyzes the reversible conversion of 3-phosphohydroxypyruvate to phosphoserine and of 3-hydroxy-2-oxo-4-phosphonooxybutanoate to phosphohydroxythreonine. This Acinetobacter baumannii (strain ACICU) protein is Phosphoserine aminotransferase.